Consider the following 361-residue polypeptide: Phospho-N-acetylmuramoyl-pentapeptide-transferase (361 aa).

The next 10 membrane-spanning stretches (helical) occupy residues 25 to 45, 73 to 93, 97 to 117, 132 to 152, 167 to 187, 200 to 220, 240 to 260, 264 to 284, 289 to 309, and 338 to 358; these read RAVMAALTALTISLLLGPWVI, TMGGSLILLAITLTTLLWADL, YVWLLLAVMLGTGALGFYDDW, FKMAWQSAIAIGAGVFLIATA, TVAYPLGAVGFCVLTYFVIVG, GLAALPTVLVSAGLAIFAYVA, VVVFCAAMCGACLGFLWFNAY, VFMGDVGALALGAALGTVAVI, IVLFLMGGLFVMEALSVMIQV, and QVVVRFWIVTMMLVLIGLSTL.

Belongs to the glycosyltransferase 4 family. MraY subfamily. Mg(2+) serves as cofactor.

Its subcellular location is the cell inner membrane. The enzyme catalyses UDP-N-acetyl-alpha-D-muramoyl-L-alanyl-gamma-D-glutamyl-meso-2,6-diaminopimeloyl-D-alanyl-D-alanine + di-trans,octa-cis-undecaprenyl phosphate = di-trans,octa-cis-undecaprenyl diphospho-N-acetyl-alpha-D-muramoyl-L-alanyl-D-glutamyl-meso-2,6-diaminopimeloyl-D-alanyl-D-alanine + UMP. It participates in cell wall biogenesis; peptidoglycan biosynthesis. Its function is as follows. Catalyzes the initial step of the lipid cycle reactions in the biosynthesis of the cell wall peptidoglycan: transfers peptidoglycan precursor phospho-MurNAc-pentapeptide from UDP-MurNAc-pentapeptide onto the lipid carrier undecaprenyl phosphate, yielding undecaprenyl-pyrophosphoryl-MurNAc-pentapeptide, known as lipid I. The protein is Phospho-N-acetylmuramoyl-pentapeptide-transferase of Chromobacterium violaceum (strain ATCC 12472 / DSM 30191 / JCM 1249 / CCUG 213 / NBRC 12614 / NCIMB 9131 / NCTC 9757 / MK).